A 122-amino-acid chain; its full sequence is Ribonuclease P protein component (122 aa).

It belongs to the RnpA family. Consists of a catalytic RNA component (M1 or rnpB) and a protein subunit.

The enzyme catalyses Endonucleolytic cleavage of RNA, removing 5'-extranucleotides from tRNA precursor.. Its function is as follows. RNaseP catalyzes the removal of the 5'-leader sequence from pre-tRNA to produce the mature 5'-terminus. It can also cleave other RNA substrates such as 4.5S RNA. The protein component plays an auxiliary but essential role in vivo by binding to the 5'-leader sequence and broadening the substrate specificity of the ribozyme. This chain is Ribonuclease P protein component, found in Lactobacillus johnsonii (strain CNCM I-12250 / La1 / NCC 533).